The sequence spans 366 residues: Histidinol-phosphate aminotransferase 2 (366 aa).

Positions 1–21 (MQVKDQLSLLQPYKPGKSPEQ) are disordered. The residue at position 222 (lysine 222) is an N6-(pyridoxal phosphate)lysine.

The protein belongs to the class-II pyridoxal-phosphate-dependent aminotransferase family. Histidinol-phosphate aminotransferase subfamily. Homodimer. Pyridoxal 5'-phosphate is required as a cofactor.

The catalysed reaction is L-histidinol phosphate + 2-oxoglutarate = 3-(imidazol-4-yl)-2-oxopropyl phosphate + L-glutamate. The protein operates within amino-acid biosynthesis; L-histidine biosynthesis; L-histidine from 5-phospho-alpha-D-ribose 1-diphosphate: step 7/9. The polypeptide is Histidinol-phosphate aminotransferase 2 (Bacillus cereus (strain ZK / E33L)).